The sequence spans 879 residues: Alanine--tRNA ligase (879 aa).

Zn(2+) contacts are provided by His-566, His-570, Cys-668, and His-672.

Belongs to the class-II aminoacyl-tRNA synthetase family. Requires Zn(2+) as cofactor.

The protein resides in the cytoplasm. The catalysed reaction is tRNA(Ala) + L-alanine + ATP = L-alanyl-tRNA(Ala) + AMP + diphosphate. In terms of biological role, catalyzes the attachment of alanine to tRNA(Ala) in a two-step reaction: alanine is first activated by ATP to form Ala-AMP and then transferred to the acceptor end of tRNA(Ala). Also edits incorrectly charged Ser-tRNA(Ala) and Gly-tRNA(Ala) via its editing domain. The sequence is that of Alanine--tRNA ligase from Listeria monocytogenes serotype 4b (strain F2365).